Consider the following 640-residue polypeptide: ETV5-related protein Ets96B (640 aa).

The segment at 315–375 (HADSTTTAAQ…HHGHQQAEQQ (61 aa)) is disordered. Residues 321-356 (TAAQQQQQQQEQQQQQQQQQQQQQHQQQLQQAAALH) adopt a coiled-coil conformation. Positions 322–355 (AAQQQQQQQEQQQQQQQQQQQQQHQQQLQQAAAL) are enriched in low complexity. A compositionally biased stretch (basic residues) spans 356-369 (HPHHHHSHHGHHGH). The ETS DNA-binding region spans 498–579 (LQLWQFLVAL…NGERYVYRFV (82 aa)). The span at 609–624 (LAKTPPTSGDSQTQSP) shows a compositional bias: polar residues. The tract at residues 609–628 (LAKTPPTSGDSQTQSPRVAK) is disordered.

This sequence belongs to the ETS family. As to expression, in the adult brain, expressed almost exclusively in dopaminergic neurons.

It localises to the nucleus. Functionally, required in dopaminergic neurons to regulate expression of genes involved in dopamine signaling. Decreases expression of the dopamine transporter DAT and increases expression of the dopamine transporter Vmat and the tyrosine 3-monooxygenase ple which is involved in dopamine biosynthesis. Also involved in negatively regulating the expression of a group of endoplasmic reticulum proteins, the molecular chaperone Calr and the protein disulfide isomerases CaBP1 and ERp60. The sequence is that of ETV5-related protein Ets96B from Drosophila melanogaster (Fruit fly).